Here is an 874-residue protein sequence, read N- to C-terminus: Alanine--tRNA ligase (874 aa).

Residues His562, His566, Cys664, and His668 each contribute to the Zn(2+) site.

Belongs to the class-II aminoacyl-tRNA synthetase family. Zn(2+) serves as cofactor.

The protein localises to the cytoplasm. It carries out the reaction tRNA(Ala) + L-alanine + ATP = L-alanyl-tRNA(Ala) + AMP + diphosphate. Catalyzes the attachment of alanine to tRNA(Ala) in a two-step reaction: alanine is first activated by ATP to form Ala-AMP and then transferred to the acceptor end of tRNA(Ala). Also edits incorrectly charged Ser-tRNA(Ala) and Gly-tRNA(Ala) via its editing domain. The protein is Alanine--tRNA ligase of Neisseria gonorrhoeae (strain ATCC 700825 / FA 1090).